A 437-amino-acid chain; its full sequence is GTPase Obg (437 aa).

An Obg domain is found at 2–160 (SMFLDTAKIS…RQLELELKIL (159 aa)). The OBG-type G domain maps to 161-338 (ADVGLVGFPS…LLEATAELLA (178 aa)). GTP contacts are provided by residues 167-174 (GFPSVGKS), 192-196 (FTTIV), 214-217 (DLPG), 284-287 (NKMD), and 319-321 (SSL). Residues Ser174 and Thr194 each coordinate Mg(2+). Residues 359–437 (GFAETEKDFE…IGKFEFEFVD (79 aa)) enclose the OCT domain.

The protein belongs to the TRAFAC class OBG-HflX-like GTPase superfamily. OBG GTPase family. Monomer. Requires Mg(2+) as cofactor.

The protein resides in the cytoplasm. An essential GTPase which binds GTP, GDP and possibly (p)ppGpp with moderate affinity, with high nucleotide exchange rates and a fairly low GTP hydrolysis rate. Plays a role in control of the cell cycle, stress response, ribosome biogenesis and in those bacteria that undergo differentiation, in morphogenesis control. The polypeptide is GTPase Obg (Streptococcus pyogenes serotype M5 (strain Manfredo)).